A 101-amino-acid polypeptide reads, in one-letter code: Small ribosomal subunit protein uS14 (101 aa).

The segment covering 1–10 has biased composition (basic and acidic residues); sequence MAKKSSIEKN. The disordered stretch occupies residues 1-23; it reads MAKKSSIEKNNRRKRMVKNAAPK.

It belongs to the universal ribosomal protein uS14 family. In terms of assembly, part of the 30S ribosomal subunit. Contacts proteins S3 and S10.

Functionally, binds 16S rRNA, required for the assembly of 30S particles and may also be responsible for determining the conformation of the 16S rRNA at the A site. The chain is Small ribosomal subunit protein uS14 from Bradyrhizobium diazoefficiens (strain JCM 10833 / BCRC 13528 / IAM 13628 / NBRC 14792 / USDA 110).